The primary structure comprises 208 residues: Ypt/Rab-type GTPase ypt71 (208 aa).

Residues 17 to 23 (SGVGKTC), 33 to 40 (FSREYKAT), Gly66, 124 to 127 (NQID), and 158 to 160 (SAK) contribute to the GTP site. An Effector region motif is present at residues 37–45 (YKATIGADF). S-geranylgeranyl cysteine attachment occurs at residues Cys206 and Cys208. Cys208 is modified (cysteine methyl ester).

The protein belongs to the small GTPase superfamily. Rab family.

The protein localises to the vacuole membrane. Its activity is regulated as follows. Rab activation is generally mediated by a guanine exchange factor (GEF), while inactivation through hydrolysis of bound GTP is catalyzed by a GTPase activating protein (GAP). Ypt/Rab-type GTPases are key regulators of membrane trafficking and intracellular vesicular transport. They act as molecular switches that convert between GTP-bound and GDP-bound states, and regulate virtually all steps of membrane traffic from the formation of the transport vesicle at the donor membrane to its fusion at the target membrane. In the GDP-bound state, Ypt proteins are predominantly cytosolic, solubilized through the interaction with a GDP dissociation inhibitor (GDI). In the GTP-bound state, the proteins are membrane bound and interact with specific effector proteins that select cargo, promote vesicle movement, or verify the correct site of fusion. Act antagonistically to ypt7 in regulating vacuolar morphology, promoting vacuolar fission. This is Ypt/Rab-type GTPase ypt71 (ypt71) from Schizosaccharomyces pombe (strain 972 / ATCC 24843) (Fission yeast).